Here is a 269-residue protein sequence, read N- to C-terminus: MVKQTDQGQGASPTKQPLKKLAEVRDLNFYYGGNKALKNINLPVYEKQVTALIGPSGCGKTTLLRCFNRMHDLYPGNRYEGEIWLGDENPRNLLQMDPIEVRMQIGMVFQKPNPFPKSIYENVAYGLRIRGITNRAVLDEVVERSLRNAALWDEVKDRLKDPGTSLSGGQQQRLCIARALATNPELILFDEPTSALDPIATVSIENLITELKDQVTILIVTHSMQQAIRISQFTAFMYLGELVEYNDTMSIFTKPVQQKTADYVNGRFG.

One can recognise an ABC transporter domain in the interval 22-264; it reads AEVRDLNFYY…PVQQKTADYV (243 aa). 54–61 provides a ligand contact to ATP; the sequence is GPSGCGKT.

This sequence belongs to the ABC transporter superfamily. Phosphate importer (TC 3.A.1.7) family. In terms of assembly, the complex is composed of two ATP-binding proteins (PstB), two transmembrane proteins (PstC and PstA) and a solute-binding protein (PstS).

It localises to the cell inner membrane. It catalyses the reaction phosphate(out) + ATP + H2O = ADP + 2 phosphate(in) + H(+). Functionally, part of the ABC transporter complex PstSACB involved in phosphate import. Responsible for energy coupling to the transport system. In Thermosynechococcus vestitus (strain NIES-2133 / IAM M-273 / BP-1), this protein is Phosphate import ATP-binding protein PstB.